The following is a 564-amino-acid chain: R-linalool synthase (564 aa).

Mg(2+) is bound by residues D320, D324, D464, T468, and E472. A DDXXD motif motif is present at residues 320 to 324; the sequence is DDVYD.

The protein belongs to the terpene synthase family. The cofactor is Mg(2+). Mn(2+) is required as a cofactor.

It catalyses the reaction (2E)-geranyl diphosphate + H2O = (R)-linalool + diphosphate. Specifically catalyzes production of (R)-(-)-linalool, the main component of lavender essential oil. This Lavandula angustifolia (Lavender) protein is R-linalool synthase.